We begin with the raw amino-acid sequence, 293 residues long: MTFNEGVQIDTSTTSTSGSGGGRRLAIGGGLGGLLVVVVAMLLGVDPGGVLSQQPLDTRDHVAPGFDLSQCRTGADANRFVQCRVVATGNSVDAVWKPLLPGYTRPHMRLFSGQVGTGCGPASSEVGPFYCPVDKTAYFDTDFFQVLVTQFGSSGGPFAEEYVVAHEYGHHVQNLLGVLGRAQQGAQGAAGSGVRTELQADCYAGVWAYYASTVKQESTGVPYLEPLSDKDIQDALAAAAAVGDDRIQQQTTGRTNPETWTHGSAAQRQKWFTVGYQTGDPNICDTFSAADLG.

Residues 1 to 22 are disordered; that stretch reads MTFNEGVQIDTSTTSTSGSGGG. The helical transmembrane segment at 25–45 threads the bilayer; the sequence is LAIGGGLGGLLVVVVAMLLGV. The interval 243–265 is disordered; that stretch reads GDDRIQQQTTGRTNPETWTHGSA. The span at 248–265 shows a compositional bias: polar residues; sequence QQQTTGRTNPETWTHGSA.

It localises to the membrane. This is an uncharacterized protein from Mycobacterium tuberculosis (strain CDC 1551 / Oshkosh).